The sequence spans 491 residues: Aspartyl/glutamyl-tRNA(Asn/Gln) amidotransferase subunit B (491 aa).

This sequence belongs to the GatB/GatE family. GatB subfamily. In terms of assembly, heterotrimer of A, B and C subunits.

It carries out the reaction L-glutamyl-tRNA(Gln) + L-glutamine + ATP + H2O = L-glutaminyl-tRNA(Gln) + L-glutamate + ADP + phosphate + H(+). The catalysed reaction is L-aspartyl-tRNA(Asn) + L-glutamine + ATP + H2O = L-asparaginyl-tRNA(Asn) + L-glutamate + ADP + phosphate + 2 H(+). In terms of biological role, allows the formation of correctly charged Asn-tRNA(Asn) or Gln-tRNA(Gln) through the transamidation of misacylated Asp-tRNA(Asn) or Glu-tRNA(Gln) in organisms which lack either or both of asparaginyl-tRNA or glutaminyl-tRNA synthetases. The reaction takes place in the presence of glutamine and ATP through an activated phospho-Asp-tRNA(Asn) or phospho-Glu-tRNA(Gln). This is Aspartyl/glutamyl-tRNA(Asn/Gln) amidotransferase subunit B from Prochlorococcus marinus (strain NATL2A).